Consider the following 243-residue polypeptide: Urease accessory protein UreF 2 (243 aa).

The protein belongs to the UreF family. As to quaternary structure, ureD, UreF and UreG form a complex that acts as a GTP-hydrolysis-dependent molecular chaperone, activating the urease apoprotein by helping to assemble the nickel containing metallocenter of UreC. The UreE protein probably delivers the nickel.

The protein localises to the cytoplasm. Required for maturation of urease via the functional incorporation of the urease nickel metallocenter. Its function is as follows. Disrupting the ure2 operon has no effect on urease activity or pathogen survival in BALB/c mice when administered orally. This is Urease accessory protein UreF 2 from Brucella abortus (strain 2308).